Reading from the N-terminus, the 422-residue chain is MHIHKIQAREILDSRGNPTIEADVILENGIIGRASVPSGASTGSREACELRDNDPKRYAGKGVQKAVKHVNEEINQALQGLSVSDQENLDRILCQLDNTENKSHLGANAILATSLACARARALSLNQPLYMTLNQGDMMTMPVPMMNILNGGAHADNNVDIQEFMIMPIGAPDFPVALQMGTEIFHVLKSVLKKQGLNTAVGDEGGFAPNIQSNRQALDLLSEAIEKAGFRLGEDIVFALDVAASELFNEGFYHMSSENQKFDSHQLIEYYANLISSYPIASIEDGLDEKDWSGWKQLTTLLGNKVQLVGDDLFVTNPKILQEGIAQGIANAILIKVNQIGTLSETRQAIKLAYDNGYRCVMSHRSGETEDTFIADLAVASGCGQIKTGSLCRTDRTAKYNQLLRINELASLPYAGKNILKR.

Glutamine 162 contributes to the (2R)-2-phosphoglycerate binding site. Glutamate 204 (proton donor) is an active-site residue. Mg(2+) contacts are provided by aspartate 241, glutamate 284, and aspartate 311. Residues lysine 336, arginine 365, serine 366, and lysine 387 each coordinate (2R)-2-phosphoglycerate. Lysine 336 acts as the Proton acceptor in catalysis.

Belongs to the enolase family. In terms of assembly, component of the RNA degradosome, a multiprotein complex involved in RNA processing and mRNA degradation. Mg(2+) is required as a cofactor.

It localises to the cytoplasm. Its subcellular location is the secreted. The protein localises to the cell surface. It catalyses the reaction (2R)-2-phosphoglycerate = phosphoenolpyruvate + H2O. It participates in carbohydrate degradation; glycolysis; pyruvate from D-glyceraldehyde 3-phosphate: step 4/5. Catalyzes the reversible conversion of 2-phosphoglycerate (2-PG) into phosphoenolpyruvate (PEP). It is essential for the degradation of carbohydrates via glycolysis. The chain is Enolase from Legionella pneumophila (strain Lens).